The sequence spans 395 residues: MAKETYVRTKPHVNIGTIGHVDHGKTTLTAAISKVLAEKQGITATDFAEIDNAPEEKERGITINTSHIEYETETRHYAHIDAPGHADYVKNMITGAAQMDGAILVVAATDGPMPQTREHILLARQVGVEYLVVFLNKTDLVDDEELVELVEMEVRELLSEYDFPGDDIPVIKGSALKALEGDPEQVKVIEELMDTVDSYIPEPKRETDKPFLMPVEDVFTITGRGTVASGRVDRGVLTTGTEIEIVGLKDEIKKTTVTGIEMFRKTLDEAQAGDNIGALLRGVDRNEIERGQVLAKPGSIKTHKKFKAEVYVLSKEEGGRHTPFFTNYRPQFYFHTTDVTGVVELPAGVEMVMPGDQVTFEIELISPVAIEQGLKFTVREGGHTVGAGTVTEIED.

Residues 10–204 form the tr-type G domain; sequence KPHVNIGTIG…TVDSYIPEPK (195 aa). Residues 19–26 form a G1 region; sequence GHVDHGKT. 19 to 26 lines the GTP pocket; the sequence is GHVDHGKT. Threonine 26 lines the Mg(2+) pocket. Residues 60 to 64 are G2; sequence GITIN. The interval 81–84 is G3; sequence DAPG. Residues 81–85 and 136–139 contribute to the GTP site; these read DAPGH and NKTD. A G4 region spans residues 136–139; sequence NKTD. The segment at 174 to 176 is G5; sequence SAL.

Belongs to the TRAFAC class translation factor GTPase superfamily. Classic translation factor GTPase family. EF-Tu/EF-1A subfamily. Monomer.

Its subcellular location is the cytoplasm. It carries out the reaction GTP + H2O = GDP + phosphate + H(+). GTP hydrolase that promotes the GTP-dependent binding of aminoacyl-tRNA to the A-site of ribosomes during protein biosynthesis. The sequence is that of Elongation factor Tu from Leuconostoc citreum (strain KM20).